A 307-amino-acid polypeptide reads, in one-letter code: Manganese-dependent inorganic pyrophosphatase (307 aa).

Mn(2+) contacts are provided by His7, Asp11, Asp13, Asp66, His88, and Asp147.

It depends on Mn(2+) as a cofactor.

The protein localises to the cytoplasm. The enzyme catalyses diphosphate + H2O = 2 phosphate + H(+). The polypeptide is Manganese-dependent inorganic pyrophosphatase (ppaC) (Methanocaldococcus jannaschii (strain ATCC 43067 / DSM 2661 / JAL-1 / JCM 10045 / NBRC 100440) (Methanococcus jannaschii)).